The primary structure comprises 219 residues: uncharacterized protein (219 aa).

The interval 70–102 is disordered; that stretch reads VHIGDNHPEPKNESKTQPKIESKKEPTLKQEEQ. A compositionally biased stretch (basic and acidic residues) spans 73–101; sequence GDNHPEPKNESKTQPKIESKKEPTLKQEE. The stretch at 96–120 forms a coiled coil; that stretch reads TLKQEEQTIQAEEEAQKIAKEETRE. The next 3 helical transmembrane spans lie at 126 to 146, 153 to 173, and 192 to 212; these read GGEIIIDIMLGILLGIAVNML, IFGLKGTAKFPIQLVLIVIVL, and TYGVIFIPIFITAQRNFAIFF.

It localises to the membrane. This is an uncharacterized protein from Acanthamoeba polyphaga mimivirus (APMV).